A 414-amino-acid polypeptide reads, in one-letter code: Riboflavin biosynthesis protein RibBA (414 aa).

Residues 1–204 are DHBP synthase; it reads MTRFDTIERA…IADMIAWRRK (204 aa). D-ribulose 5-phosphate contacts are provided by residues 28–29, Asp-33, 141–145, and Glu-165; these read RE and RPGHT. Glu-29 provides a ligand contact to Mg(2+). A Mg(2+)-binding site is contributed by His-144. The GTP cyclohydrolase II stretch occupies residues 205–414; it reads HEKQVVRVAE…DDLDLGETAQ (210 aa). 255 to 259 contributes to the GTP binding site; it reads RVHSE. Cys-260, Cys-271, and Cys-273 together coordinate Zn(2+). GTP contacts are provided by residues Gln-276, 299–301, and Thr-321; that span reads EGR. The Proton acceptor; for GTP cyclohydrolase activity role is filled by Asp-333. Arg-335 acts as the Nucleophile; for GTP cyclohydrolase activity in catalysis. GTP-binding residues include Thr-356 and Lys-361.

This sequence in the N-terminal section; belongs to the DHBP synthase family. It in the C-terminal section; belongs to the GTP cyclohydrolase II family. Mg(2+) serves as cofactor. Requires Mn(2+) as cofactor. It depends on Zn(2+) as a cofactor.

It catalyses the reaction D-ribulose 5-phosphate = (2S)-2-hydroxy-3-oxobutyl phosphate + formate + H(+). The enzyme catalyses GTP + 4 H2O = 2,5-diamino-6-hydroxy-4-(5-phosphoribosylamino)-pyrimidine + formate + 2 phosphate + 3 H(+). It participates in cofactor biosynthesis; riboflavin biosynthesis; 2-hydroxy-3-oxobutyl phosphate from D-ribulose 5-phosphate: step 1/1. The protein operates within cofactor biosynthesis; riboflavin biosynthesis; 5-amino-6-(D-ribitylamino)uracil from GTP: step 1/4. Its function is as follows. Catalyzes the conversion of D-ribulose 5-phosphate to formate and 3,4-dihydroxy-2-butanone 4-phosphate. Functionally, catalyzes the conversion of GTP to 2,5-diamino-6-ribosylamino-4(3H)-pyrimidinone 5'-phosphate (DARP), formate and pyrophosphate. The polypeptide is Riboflavin biosynthesis protein RibBA (Nocardia farcinica (strain IFM 10152)).